Here is a 513-residue protein sequence, read N- to C-terminus: ATP synthase subunit alpha (513 aa).

ATP is bound at residue 169–176; it reads GDRQTGKT.

It belongs to the ATPase alpha/beta chains family. F-type ATPases have 2 components, CF(1) - the catalytic core - and CF(0) - the membrane proton channel. CF(1) has five subunits: alpha(3), beta(3), gamma(1), delta(1), epsilon(1). CF(0) has three main subunits: a(1), b(2) and c(9-12). The alpha and beta chains form an alternating ring which encloses part of the gamma chain. CF(1) is attached to CF(0) by a central stalk formed by the gamma and epsilon chains, while a peripheral stalk is formed by the delta and b chains.

Its subcellular location is the cell inner membrane. The enzyme catalyses ATP + H2O + 4 H(+)(in) = ADP + phosphate + 5 H(+)(out). Functionally, produces ATP from ADP in the presence of a proton gradient across the membrane. The alpha chain is a regulatory subunit. The protein is ATP synthase subunit alpha of Vibrio vulnificus (strain CMCP6).